The following is an 825-amino-acid chain: MKFIKRLLVFSLICIILGVTTIFGFYFYVKSDLPDVATLRDVQLQTPMQVFSQDGKLIAQFGEKRRIPLKLEEMPKELIEAVIATEDSRYYEHYGFDPIGITRAAFAVLASGSASQGASTITQQLARNFFLSNEKKVMRKVKEIFIAIHIEQLLSKQEILELYLNKIYLGYRSYGVGAAAQAYFGKEVKDLTLGEIALIAGLPKAPSTMNPIYSVERATNRRNVVLQRMLDEKYITKAEYDAARAEPVLPKYHGAEIELNAPYVAEIARAWMVERYGEEAAYTSGMNVYTTVDSKLQRAANQAAINNLLAYDERHGYRGAEKELWQVNQPAWSSTQLSEYLSNEPTYGDMFPAAVLSVEEKSAQVWVKSYGVQTIAWEDMNWARRFINDDRQGPLPKSANEFLAAGQQIWVRPRTQDGAITAWKLTQVPNANTAFVAMNPENGAVTALVGGFNFVHNKFNRATQSVRQVGSSIKPFIYSAALNKGLTLATLINDAPINQWDESQGTAWRPKNSPPTYTGPTRLRIGLAQSKNVMAVRVLREVGLDETREYLTRFGFKLDQLPRSETIALGAGSLTPVQMAQGFSVFANNGYFVEPFYISRVENPFGNIEFSAEPKVVCHRECSSELDEFAEQDAASPYAPKVISEQNAFLTREMLYSNIWGGGEWSSDTGWNGTGWRAQALKRRDIGGKTGTTNDSKDAWYNGYAPGIVGVAWVGFDDHSRNLGKTAPNRNIEDDVSGAESGGKTALPAWVEFMSLALQDVPVQQKAVPNNIARVRIDRDTGLLTNKLDSSSMFEYFEAGTEPTEYVSEHVNESIYSTSSGEELF.

The Cytoplasmic portion of the chain corresponds to 1–6 (MKFIKR). Residues 7-27 (LLVFSLICIILGVTTIFGFYF) form a helical; Signal-anchor for type II membrane protein membrane-spanning segment. Topologically, residues 28–825 (YVKSDLPDVA…YSTSSGEELF (798 aa)) are periplasmic. The segment at 48 to 216 (MQVFSQDGKL…STMNPIYSVE (169 aa)) is transglycosylase. Glu86 serves as the catalytic Proton donor; for transglycosylase activity. Positions 413 to 752 (PRTQDGAITA…GKTALPAWVE (340 aa)) are transpeptidase. Ser471 (acyl-ester intermediate; for transpeptidase activity) is an active-site residue.

In the N-terminal section; belongs to the glycosyltransferase 51 family. The protein in the C-terminal section; belongs to the transpeptidase family.

It localises to the cell inner membrane. The catalysed reaction is [GlcNAc-(1-&gt;4)-Mur2Ac(oyl-L-Ala-gamma-D-Glu-L-Lys-D-Ala-D-Ala)](n)-di-trans,octa-cis-undecaprenyl diphosphate + beta-D-GlcNAc-(1-&gt;4)-Mur2Ac(oyl-L-Ala-gamma-D-Glu-L-Lys-D-Ala-D-Ala)-di-trans,octa-cis-undecaprenyl diphosphate = [GlcNAc-(1-&gt;4)-Mur2Ac(oyl-L-Ala-gamma-D-Glu-L-Lys-D-Ala-D-Ala)](n+1)-di-trans,octa-cis-undecaprenyl diphosphate + di-trans,octa-cis-undecaprenyl diphosphate + H(+). The enzyme catalyses Preferential cleavage: (Ac)2-L-Lys-D-Ala-|-D-Ala. Also transpeptidation of peptidyl-alanyl moieties that are N-acyl substituents of D-alanine.. The protein operates within cell wall biogenesis; peptidoglycan biosynthesis. Its function is as follows. Cell wall formation. Synthesis of cross-linked peptidoglycan from the lipid intermediates. The enzyme has a penicillin-insensitive transglycosylase N-terminal domain (formation of linear glycan strands) and a penicillin-sensitive transpeptidase C-terminal domain (cross-linking of the peptide subunits). This is Penicillin-binding protein 1A (mrcA) from Vibrio cholerae serotype O1 (strain ATCC 39315 / El Tor Inaba N16961).